We begin with the raw amino-acid sequence, 489 residues long: Cobyric acid synthase (489 aa).

The region spanning 252–441 (ALTIGVIQLP…IHGIFANTEF (190 aa)) is the GATase cobBQ-type domain. The active-site Nucleophile is the Cys-330. His-433 is a catalytic residue.

It belongs to the CobB/CobQ family. CobQ subfamily.

It functions in the pathway cofactor biosynthesis; adenosylcobalamin biosynthesis. Its function is as follows. Catalyzes amidations at positions B, D, E, and G on adenosylcobyrinic A,C-diamide. NH(2) groups are provided by glutamine, and one molecule of ATP is hydrogenolyzed for each amidation. The polypeptide is Cobyric acid synthase (Herpetosiphon aurantiacus (strain ATCC 23779 / DSM 785 / 114-95)).